The chain runs to 342 residues: Methionine import ATP-binding protein MetN 2 (342 aa).

Residues 2-241 (ISIEGLSKVF…PKQLVTRKFV (240 aa)) form the ABC transporter domain. Residue 38–45 (GYSGAGKS) coordinates ATP.

Belongs to the ABC transporter superfamily. Methionine importer (TC 3.A.1.24) family. The complex is composed of two ATP-binding proteins (MetN), two transmembrane proteins (MetI) and a solute-binding protein (MetQ).

Its subcellular location is the cell membrane. It carries out the reaction L-methionine(out) + ATP + H2O = L-methionine(in) + ADP + phosphate + H(+). The catalysed reaction is D-methionine(out) + ATP + H2O = D-methionine(in) + ADP + phosphate + H(+). In terms of biological role, part of the ABC transporter complex MetNIQ involved in methionine import. Responsible for energy coupling to the transport system. The chain is Methionine import ATP-binding protein MetN 2 from Oceanobacillus iheyensis (strain DSM 14371 / CIP 107618 / JCM 11309 / KCTC 3954 / HTE831).